The chain runs to 295 residues: Bifunctional protein FolD (295 aa).

NADP(+)-binding positions include 166 to 168 (GRS), T195, and V236.

This sequence belongs to the tetrahydrofolate dehydrogenase/cyclohydrolase family. As to quaternary structure, homodimer.

It carries out the reaction (6R)-5,10-methylene-5,6,7,8-tetrahydrofolate + NADP(+) = (6R)-5,10-methenyltetrahydrofolate + NADPH. It catalyses the reaction (6R)-5,10-methenyltetrahydrofolate + H2O = (6R)-10-formyltetrahydrofolate + H(+). The protein operates within one-carbon metabolism; tetrahydrofolate interconversion. In terms of biological role, catalyzes the oxidation of 5,10-methylenetetrahydrofolate to 5,10-methenyltetrahydrofolate and then the hydrolysis of 5,10-methenyltetrahydrofolate to 10-formyltetrahydrofolate. This is Bifunctional protein FolD from Syntrophobacter fumaroxidans (strain DSM 10017 / MPOB).